The following is a 154-amino-acid chain: C-type lectin 16 (154 aa).

The first 20 residues, 1–20 (MALSLYLIAVICSLVGFTAS), serve as a signal peptide directing secretion. One can recognise a C-type lectin domain in the interval 27–152 (DNRFCFPNVV…CASMRRFVCE (126 aa)). 2 disulfide bridges follow: Cys46/Cys151 and Cys123/Cys143.

As to quaternary structure, (Microbial infection) Interacts with non-structural protein 1 of dengue virus type 2. Interacts with envelope protein E of dengue virus type 2. Female salivary gland (at protein level). Not detected in female carcass without salivary glands (at protein level). Not detected in male tissues (at protein level).

The protein localises to the secreted. Functionally, putative lectin. May have a regulatory role in mosquito immunity. Probably suppresses replication of dengue virus type 2 in mosquito salivary glands. The sequence is that of C-type lectin 16 from Aedes aegypti (Yellowfever mosquito).